We begin with the raw amino-acid sequence, 531 residues long: Peptide chain release factor 3 (531 aa).

The tr-type G domain occupies 10-278 (ARRRTFAIIS…DFVEHAPGPL (269 aa)). GTP-binding positions include 19 to 26 (SHPDAGKT), 87 to 91 (DTPGH), and 141 to 144 (NKLD).

This sequence belongs to the TRAFAC class translation factor GTPase superfamily. Classic translation factor GTPase family. PrfC subfamily.

Its subcellular location is the cytoplasm. In terms of biological role, increases the formation of ribosomal termination complexes and stimulates activities of RF-1 and RF-2. It binds guanine nucleotides and has strong preference for UGA stop codons. It may interact directly with the ribosome. The stimulation of RF-1 and RF-2 is significantly reduced by GTP and GDP, but not by GMP. This Thioalkalivibrio sulfidiphilus (strain HL-EbGR7) protein is Peptide chain release factor 3.